Reading from the N-terminus, the 642-residue chain is Influenza virus NS1A-binding protein homolog (642 aa).

The BTB domain maps to Cys32 to Lys99. One can recognise a BACK domain in the interval Cys134–Asp233. Phosphoserine is present on residues Ser246, Ser277, Ser322, Ser336, and Ser338. The segment at Lys257–Ser281 is disordered. Polar residues predominate over residues Lys265–Ser281. 6 Kelch repeats span residues Lys369–Gly415, Gln416–Gly463, Leu465–Gly512, Tyr513–Gly559, Leu561–Asn606, and Ile608–Phe642.

This sequence belongs to the BTB-kelch protein family. In terms of assembly, homodimer; through the BTB domain. Interacts with AHR/Aryl hydrocarbon receptor. Interacts (via BACK domain) with pre-mRNA-binding protein HNRNPK; the interaction is direct. Interacts (via BACK domain) with splicing factor PTBP1; the interaction is direct. Interacts (via Kelch repeats) with RNA polymerase POLR2A (via C-terminal domain). Interacts (via BACK domain) with splicing factor SNRPA; the interaction is indirect. Interacts (via Kelch repeats) with splicing factor SART1. Interacts (via BACK domain) with ALYREF; the interaction is indirect and likely plays a role in mRNA nuclear export. Interacts (via Kelch repeats) with KLHL20 (via Kelch repeats); this interaction blocks the assembly of Cul3-KLHL20 complex. Ubiquitous expression. In the heart, the highest expression is detected in the ventricles and the lowest in the atria. Expressed in dendrites and spines in neurons.

It is found in the cytoplasm. The protein localises to the cytoskeleton. It localises to the nucleus. Functionally, involved in many cell functions, including pre-mRNA splicing, the aryl hydrocarbon receptor (AHR) pathway, F-actin organization and protein ubiquitination. Plays a role in the dynamic organization of the actin skeleton as a stabilizer of actin filaments by association with F-actin through Kelch repeats. Protects cells from cell death induced by actin destabilization. Functions as a modifier of the AHR/Aryl hydrocarbon receptor pathway increasing the concentration of AHR available to activate transcription. In addition, functions as a negative regulator of BCR(KLHL20) E3 ubiquitin ligase complex to prevent ubiquitin-mediated proteolysis of PML and DAPK1, two tumor suppressors. Inhibits pre-mRNA splicing (in vitro). May play a role in mRNA nuclear export. In terms of biological role, may play a role in cell cycle progression in the nucleus. In Mus musculus (Mouse), this protein is Influenza virus NS1A-binding protein homolog.